Consider the following 302-residue polypeptide: Putative gluconeogenesis factor (302 aa).

The protein belongs to the gluconeogenesis factor family.

The protein localises to the cytoplasm. Required for morphogenesis under gluconeogenic growth conditions. The sequence is that of Putative gluconeogenesis factor (ybhK) from Salmonella typhi.